A 593-amino-acid chain; its full sequence is UvrABC system protein C (593 aa).

The GIY-YIG domain occupies 14-91 (DKPGCYLMKN…IKEHDPRYNV (78 aa)). One can recognise a UVR domain in the interval 196–231 (EEMKQTLTEKMLQAAENMEFERAKEYRDQIKSIEAV).

It belongs to the UvrC family. In terms of assembly, interacts with UvrB in an incision complex.

The protein resides in the cytoplasm. Its function is as follows. The UvrABC repair system catalyzes the recognition and processing of DNA lesions. UvrC both incises the 5' and 3' sides of the lesion. The N-terminal half is responsible for the 3' incision and the C-terminal half is responsible for the 5' incision. The sequence is that of UvrABC system protein C from Brevibacillus brevis (strain 47 / JCM 6285 / NBRC 100599).